The sequence spans 609 residues: Non-structural glycoprotein (609 aa).

An N-terminal signal peptide occupies residues M1–G24. Over G25–N581 the chain is Extracellular. Residues N87, N375, N465, N472, N478, N506, N529, N551, and N562 are each glycosylated (N-linked (GlcNAc...) asparagine; by host). A helical transmembrane segment spans residues M582–N599. At K600–S609 the chain is on the cytoplasmic side.

Belongs to the ephemerovirus glycoprotein family.

It is found in the membrane. The protein is Non-structural glycoprotein (GNS) of Adelaide River virus (ARV).